We begin with the raw amino-acid sequence, 202 residues long: Casparian strip membrane protein 4 (202 aa).

At 1–40 the chain is on the cytoplasmic side; that stretch reads MKSDSIAVDVPAESSSAIKGKAPLLGLARDHTGSGGYKRG. A helical membrane pass occupies residues 41–61; the sequence is LSIFDFLLRLAAIVAALAAAA. Topologically, residues 62-90 are extracellular; that stretch reads TMGTSDETLPFFTQFLQFEASYDDLPTFQ. Residues 91–111 traverse the membrane as a helical segment; it reads FFVVAIAIVTGYLVLSLPFSV. Topologically, residues 112–130 are cytoplasmic; the sequence is VTIVRPLAVAPRLLLLVLD. A helical membrane pass occupies residues 131-151; it reads TAALALDTAAASAAAAIVYLA. At 152–176 the chain is on the extracellular side; that stretch reads HNGNTNTNWLPICQQFGDFCQKTSG. Residues 177-197 form a helical membrane-spanning segment; sequence AVVSAFASVTFLAILVVISGV. Residues 198-202 are Cytoplasmic-facing; it reads SLKRP.

The protein belongs to the Casparian strip membrane proteins (CASP) family. As to quaternary structure, homodimer and heterodimers.

The protein resides in the cell membrane. In terms of biological role, regulates membrane-cell wall junctions and localized cell wall deposition. Required for establishment of the Casparian strip membrane domain (CSD) and the subsequent formation of Casparian strips, a cell wall modification of the root endodermis that determines an apoplastic barrier between the intraorganismal apoplasm and the extraorganismal apoplasm and prevents lateral diffusion. The sequence is that of Casparian strip membrane protein 4 from Arabidopsis lyrata subsp. lyrata (Lyre-leaved rock-cress).